The sequence spans 591 residues: Aspartate--tRNA(Asp/Asn) ligase (591 aa).

L-aspartate is bound at residue Glu-174. The tract at residues 198-201 is aspartate; it reads QLFK. Arg-220 contributes to the L-aspartate binding site. ATP contacts are provided by residues 220-222 and Gln-229; that span reads RDE. Residue His-450 participates in L-aspartate binding. ATP is bound at residue Glu-483. Arg-490 contacts L-aspartate. An ATP-binding site is contributed by 535-538; the sequence is GLDR.

The protein belongs to the class-II aminoacyl-tRNA synthetase family. Type 1 subfamily. As to quaternary structure, homodimer.

The protein resides in the cytoplasm. It catalyses the reaction tRNA(Asx) + L-aspartate + ATP = L-aspartyl-tRNA(Asx) + AMP + diphosphate. Functionally, aspartyl-tRNA synthetase with relaxed tRNA specificity since it is able to aspartylate not only its cognate tRNA(Asp) but also tRNA(Asn). Reaction proceeds in two steps: L-aspartate is first activated by ATP to form Asp-AMP and then transferred to the acceptor end of tRNA(Asp/Asn). In Pseudomonas fluorescens (strain SBW25), this protein is Aspartate--tRNA(Asp/Asn) ligase.